The primary structure comprises 450 residues: Tubulin alpha-2 chain (450 aa).

7 residues coordinate GTP: Gln11, Glu71, Gly144, Thr145, Thr179, Asn206, and Asn228. Residue Glu71 coordinates Mg(2+). Glu254 is a catalytic residue. Phosphothreonine is present on Thr349. The disordered stretch occupies residues 430–450; it reads KDYEEVGAEGGDDEDDEGEEY. Over residues 431-450 the composition is skewed to acidic residues; sequence DYEEVGAEGGDDEDDEGEEY.

The protein belongs to the tubulin family. As to quaternary structure, dimer of alpha and beta chains. A typical microtubule is a hollow water-filled tube with an outer diameter of 25 nm and an inner diameter of 15 nM. Alpha-beta heterodimers associate head-to-tail to form protofilaments running lengthwise along the microtubule wall with the beta-tubulin subunit facing the microtubule plus end conferring a structural polarity. Microtubules usually have 13 protofilaments but different protofilament numbers can be found in some organisms and specialized cells. It depends on Mg(2+) as a cofactor. In terms of processing, undergoes a tyrosination/detyrosination cycle, the cyclic removal and re-addition of a C-terminal tyrosine residue by the enzymes tubulin tyrosine carboxypeptidase (TTCP) and tubulin tyrosine ligase (TTL), respectively. Acetylation of alpha chains at Lys-40 stabilizes microtubules and affects affinity and processivity of microtubule motors. This modification has a role in multiple cellular functions, ranging from cell motility, cell cycle progression or cell differentiation to intracellular trafficking and signaling.

Its subcellular location is the cytoplasm. It is found in the cytoskeleton. The enzyme catalyses GTP + H2O = GDP + phosphate + H(+). In terms of biological role, tubulin is the major constituent of microtubules, a cylinder consisting of laterally associated linear protofilaments composed of alpha- and beta-tubulin heterodimers. Microtubules grow by the addition of GTP-tubulin dimers to the microtubule end, where a stabilizing cap forms. Below the cap, tubulin dimers are in GDP-bound state, owing to GTPase activity of alpha-tubulin. The sequence is that of Tubulin alpha-2 chain (TUBA2) from Arabidopsis thaliana (Mouse-ear cress).